Reading from the N-terminus, the 23-residue chain is Protein DCL, chloroplastic (23 aa).

The protein localises to the plastid. It is found in the chloroplast. Functionally, has a function in the early stage of chloroplast development and palisade cell morphogenesis. The protein is Protein DCL, chloroplastic of Pseudotsuga menziesii (Douglas-fir).